Here is a 311-residue protein sequence, read N- to C-terminus: L-lactate dehydrogenase (311 aa).

NAD(+)-binding positions include Val-12, Asp-33, Lys-38, Tyr-63, and 77–78 (GA). Substrate-binding residues include Gln-80 and Arg-86. NAD(+) is bound by residues Ser-99, 116–118 (VTN), and Ser-141. 118–121 (NPVD) provides a ligand contact to substrate. 146 to 149 (DSSR) serves as a coordination point for substrate. The beta-D-fructose 1,6-bisphosphate site is built by Arg-151 and His-166. The Proton acceptor role is filled by His-173. Tyr-219 is modified (phosphotyrosine). Substrate is bound at residue Thr-228.

This sequence belongs to the LDH/MDH superfamily. LDH family. In terms of assembly, homotetramer.

The protein localises to the cytoplasm. The enzyme catalyses (S)-lactate + NAD(+) = pyruvate + NADH + H(+). It functions in the pathway fermentation; pyruvate fermentation to lactate; (S)-lactate from pyruvate: step 1/1. Its activity is regulated as follows. Allosterically activated by fructose 1,6-bisphosphate (FBP). In terms of biological role, catalyzes the conversion of lactate to pyruvate. The protein is L-lactate dehydrogenase of Thermoanaerobacterium saccharolyticum (strain DSM 8691 / JW/SL-YS485).